Consider the following 575-residue polypeptide: Urease subunit alpha (575 aa).

Residues 137–575 (GGIDCHIHFI…LPMTQRYFLF (439 aa)) form the Urease domain. 3 residues coordinate Ni(2+): histidine 142, histidine 144, and lysine 225. Residue lysine 225 is modified to N6-carboxylysine. Histidine 227 contacts substrate. Positions 254 and 280 each coordinate Ni(2+). Histidine 328 (proton donor) is an active-site residue. A Ni(2+)-binding site is contributed by aspartate 368.

Belongs to the metallo-dependent hydrolases superfamily. Urease alpha subunit family. Heterotrimer of UreA (gamma), UreB (beta) and UreC (alpha) subunits. Three heterotrimers associate to form the active enzyme. The cofactor is Ni cation. Post-translationally, carboxylation allows a single lysine to coordinate two nickel ions.

Its subcellular location is the cytoplasm. It catalyses the reaction urea + 2 H2O + H(+) = hydrogencarbonate + 2 NH4(+). It participates in nitrogen metabolism; urea degradation; CO(2) and NH(3) from urea (urease route): step 1/1. The protein is Urease subunit alpha of Methylibium petroleiphilum (strain ATCC BAA-1232 / LMG 22953 / PM1).